The sequence spans 319 residues: Acetyl-coenzyme A carboxylase carboxyl transferase subunit alpha (319 aa).

Positions 39 to 296 (EINRLRSKSI…KTQLLLDLTE (258 aa)) constitute a CoA carboxyltransferase C-terminal domain.

This sequence belongs to the AccA family. Acetyl-CoA carboxylase is a heterohexamer composed of biotin carboxyl carrier protein (AccB), biotin carboxylase (AccC) and two subunits each of ACCase subunit alpha (AccA) and ACCase subunit beta (AccD).

It is found in the cytoplasm. It catalyses the reaction N(6)-carboxybiotinyl-L-lysyl-[protein] + acetyl-CoA = N(6)-biotinyl-L-lysyl-[protein] + malonyl-CoA. The protein operates within lipid metabolism; malonyl-CoA biosynthesis; malonyl-CoA from acetyl-CoA: step 1/1. Its function is as follows. Component of the acetyl coenzyme A carboxylase (ACC) complex. First, biotin carboxylase catalyzes the carboxylation of biotin on its carrier protein (BCCP) and then the CO(2) group is transferred by the carboxyltransferase to acetyl-CoA to form malonyl-CoA. This is Acetyl-coenzyme A carboxylase carboxyl transferase subunit alpha from Blochmanniella pennsylvanica (strain BPEN).